The primary structure comprises 124 residues: Galanin peptides (124 aa).

Residues 1–19 (MARGSVILLAWLLLVATLS) form the signal peptide. Positions 20–30 (ATLGLGMPTKE) are excised as a propeptide. T61 carries the threonine amide modification. Phosphoserine is present on residues S117 and S118.

This sequence belongs to the galanin family.

The protein localises to the secreted. Endocrine hormone of the central and peripheral nervous systems that binds and activates the G protein-coupled receptors GALR1, GALR2, and GALR3. This small neuropeptide may regulate diverse physiologic functions including contraction of smooth muscle of the gastrointestinal and genitourinary tract, growth hormone and insulin release and adrenal secretion. In Rattus norvegicus (Rat), this protein is Galanin peptides (Gal).